The sequence spans 271 residues: 4-hydroxy-tetrahydrodipicolinate reductase (271 aa).

NAD(+) contacts are provided by residues 11–16 and Glu-37; that span reads GGSGRM. Arg-38 lines the NADP(+) pocket. Residues 101 to 103 and 125 to 128 contribute to the NAD(+) site; these read GTT and APNM. The active-site Proton donor/acceptor is the His-158. Position 159 (His-159) interacts with (S)-2,3,4,5-tetrahydrodipicolinate. The active-site Proton donor is the Lys-162. 168–169 lines the (S)-2,3,4,5-tetrahydrodipicolinate pocket; it reads GT.

It belongs to the DapB family.

The protein resides in the cytoplasm. It carries out the reaction (S)-2,3,4,5-tetrahydrodipicolinate + NAD(+) + H2O = (2S,4S)-4-hydroxy-2,3,4,5-tetrahydrodipicolinate + NADH + H(+). The catalysed reaction is (S)-2,3,4,5-tetrahydrodipicolinate + NADP(+) + H2O = (2S,4S)-4-hydroxy-2,3,4,5-tetrahydrodipicolinate + NADPH + H(+). The protein operates within amino-acid biosynthesis; L-lysine biosynthesis via DAP pathway; (S)-tetrahydrodipicolinate from L-aspartate: step 4/4. Catalyzes the conversion of 4-hydroxy-tetrahydrodipicolinate (HTPA) to tetrahydrodipicolinate. The polypeptide is 4-hydroxy-tetrahydrodipicolinate reductase (Shewanella loihica (strain ATCC BAA-1088 / PV-4)).